A 449-amino-acid chain; its full sequence is MREVISINVGQAGCQIANSCWELYCLEHGIQPDGYLTEERKAQDPDQGFSTFFSETGNGKHVPRAIYCDLEPNVVDEVRTGAYRNLFHPEMMITGKEDASNNYARGHYTVGKELIDGVLDKIRRVADNCAGLQGFLVFHSFGGGTGSGFGALLMERLSVDYGKKSKLEFCVYPAPQTATSVVEPYNSILTTHTTLEHSDCSFMVDNEAIYDICRRNLGLERPNYENLNRLIAQVVSSITASLRFDGSLNVDLNEFQTNLVPYPRIHFPLVAYSPVISAAKAAHEANSVQEMTMSCFEPNNQMVKCDPRHGKYMATCLLYRGDVVPNDAHAAVATLKTKRTIQFVDWCPTGFKLGICYQAPENVPNGDLAKVSRAVCMLSNTTAIAEAWSSLSLKFDLMHSKRAFVHWYVGEGMEEGEFSEAREDLAALERDYEEVATDSMGDEELEAEY.

GTP is bound by residues Q11, E71, S140, G144, T145, T179, N206, and N228. Residue E71 participates in Mg(2+) binding. The active site involves E254.

It belongs to the tubulin family. In terms of assembly, dimer of alpha and beta chains. A typical microtubule is a hollow water-filled tube with an outer diameter of 25 nm and an inner diameter of 15 nM. Alpha-beta heterodimers associate head-to-tail to form protofilaments running lengthwise along the microtubule wall with the beta-tubulin subunit facing the microtubule plus end conferring a structural polarity. Microtubules usually have 13 protofilaments but different protofilament numbers can be found in some organisms and specialized cells. It depends on Mg(2+) as a cofactor.

The protein localises to the cytoplasm. Its subcellular location is the cytoskeleton. It carries out the reaction GTP + H2O = GDP + phosphate + H(+). In terms of biological role, tubulin is the major constituent of microtubules, a cylinder consisting of laterally associated linear protofilaments composed of alpha- and beta-tubulin heterodimers. Microtubules grow by the addition of GTP-tubulin dimers to the microtubule end, where a stabilizing cap forms. Below the cap, tubulin dimers are in GDP-bound state, owing to GTPase activity of alpha-tubulin. This is Tubulin alpha chain (TUB1) from Gibberella zeae (strain ATCC MYA-4620 / CBS 123657 / FGSC 9075 / NRRL 31084 / PH-1) (Wheat head blight fungus).